A 122-amino-acid polypeptide reads, in one-letter code: Autophagy-related protein 8e (122 aa).

A lipid anchor (Phosphatidylethanolamine amidated glycine) is attached at Gly-118. Residues 119-122 constitute a propeptide, removed in mature form; the sequence is ASSI.

The protein belongs to the ATG8 family. As to quaternary structure, interacts with ATG4. Interacts with SH3P2. Interacts with ATG1A and ATG11. Binds to ATG1A and ATG11 on autophagic vesicles. The C-terminal 4 residues are removed by ATG4 to expose Gly-118 at the C-terminus. This Gly-118 forms then a thioester bond with the 'Cys-558' of ATG7 (E1-like activating enzyme) before being transferred to the 'Cys-258' of ATG3 (the specific E2 conjugating enzyme), in order to be finally amidated with phosphatidylethanolamine. This lipid modification anchors ATG8 to autophagosomes. In terms of tissue distribution, constitutively expressed.

It localises to the cytoplasmic vesicle. Its subcellular location is the autophagosome membrane. The protein localises to the vacuole membrane. It is found in the cytoplasm. The protein resides in the cytoskeleton. In terms of biological role, ubiquitin-like modifier involved in autophagosomes formation. May mediate the delivery of the autophagosomes to the vacuole via the microtubule cytoskeleton. The polypeptide is Autophagy-related protein 8e (ATG8E) (Arabidopsis thaliana (Mouse-ear cress)).